The following is a 220-amino-acid chain: Zip homologous protein 1 (220 aa).

Residues 6 to 44 form an RING-type zinc finger; that stretch reads CNGCGCSPSKRQFFITACSHVFCETCRTTPTADFCHLCK. A coiled-coil region spans residues 124–155; sequence LTSFEENNRKKLEDIERENEKLRNLISALELK. Disordered stretches follow at residues 166 to 186 and 201 to 220; these read EFFMQGTPTSSNPSVAGSDVD and RSDSSSSNCSSQSNRGGSLF. Positions 171 to 180 are enriched in polar residues; that stretch reads GTPTSSNPSV.

Interacts with zhp-2; the interaction is required for their chromosome association and stability. In terms of tissue distribution, expressed in the germline.

Its subcellular location is the chromosome. Recruited co-dependently with zhp-2 to the synaptonemal complex between homologous chromosome pairs to regulate the formation and number of crossover events between homologs during meiotic recombination. Together with zhp-2, promotes the accumulation of pro-crossover proteins, including zhp-3 and zhp-4, at a designated crossover site along the recombination intermediate. Limits the number of crossover sites along a recombination intermediate by restricting the association of these pro-crossover proteins with other recombination sites during late prophase. Also, together with zhp-2, plays a role in chromosome remodeling following crossover formation to promote two successive rounds of chromosome segregation during meiosis. The protein is Zip homologous protein 1 of Caenorhabditis elegans.